The sequence spans 466 residues: Histidine--tRNA ligase (466 aa).

Belongs to the class-II aminoacyl-tRNA synthetase family. In terms of assembly, homodimer.

The protein resides in the cytoplasm. It catalyses the reaction tRNA(His) + L-histidine + ATP = L-histidyl-tRNA(His) + AMP + diphosphate + H(+). The polypeptide is Histidine--tRNA ligase (hisS) (Xylella fastidiosa (strain 9a5c)).